The primary structure comprises 282 residues: 2-dehydro-3-deoxyphosphooctonate aldolase (282 aa).

Belongs to the KdsA family.

The protein localises to the cytoplasm. It carries out the reaction D-arabinose 5-phosphate + phosphoenolpyruvate + H2O = 3-deoxy-alpha-D-manno-2-octulosonate-8-phosphate + phosphate. Its pathway is carbohydrate biosynthesis; 3-deoxy-D-manno-octulosonate biosynthesis; 3-deoxy-D-manno-octulosonate from D-ribulose 5-phosphate: step 2/3. It participates in bacterial outer membrane biogenesis; lipopolysaccharide biosynthesis. The sequence is that of 2-dehydro-3-deoxyphosphooctonate aldolase from Shewanella pealeana (strain ATCC 700345 / ANG-SQ1).